Reading from the N-terminus, the 100-residue chain is Small ribosomal subunit protein uS14c (100 aa).

It belongs to the universal ribosomal protein uS14 family. Part of the 30S ribosomal subunit.

The protein resides in the plastid. It is found in the chloroplast. Binds 16S rRNA, required for the assembly of 30S particles. This is Small ribosomal subunit protein uS14c from Eucalyptus globulus subsp. globulus (Tasmanian blue gum).